We begin with the raw amino-acid sequence, 485 residues long: Transcription factor E2FA (485 aa).

Positions 1-11 (MSGVVRSSPGS) are enriched in low complexity. Disordered stretches follow at residues 1 to 69 (MSGV…SNNN) and 114 to 159 (SGFT…SPIT). Positions 12–26 (SQPPPPPPHHPPSSP) are enriched in pro residues. The segment covering 114–125 (SGFTNIPSSPCQ) has biased composition (polar residues). Over residues 129–141 (KGGRVNIKSKAKG) the composition is skewed to basic residues. The span at 142–159 (NKSTPQTPISTNAGSPIT) shows a compositional bias: polar residues. A DNA-binding region spans residues 167–232 (RYDSSLGLLT…PFKNRILWKG (66 aa)). A coiled-coil region spans residues 245–286 (SVLQLQAEIENLALEEQALDNQIRQTEERLRDLSENEKNQKW). Residues 249–277 (LQAEIENLALEEQALDNQIRQTEERLRDL) are leucine-zipper. Residues 435 to 450 (DYWLLSNAEISMTDIW) are retinoblastoma protein binding.

The protein belongs to the E2F/DP family. In terms of assembly, heterodimer with DP proteins. Interacts (via dimerization domain) preferentially with DPA, but also with DPB. Interacts with maize retinoblastoma-related protein RBR1. No interaction with E2FD. In terms of tissue distribution, highly expressed in the shoot apical meristem, emerging leaf primordia, and vascular tissues of young leaf primordia. Expressed in flowers, in epidermis and cortex of hypocotyls, and at lower levels in leaves.

The protein resides in the cytoplasm. The protein localises to the nucleus. Its function is as follows. Transcription activator that binds DNA cooperatively with DP proteins through the E2 recognition site, 5'-TTTC[CG]CGC-3' found in the promoter region of a number of genes whose products are involved in cell cycle regulation or in DNA replication. The binding of retinoblastoma-related proteins represses transactivation. Regulates gene expression both positively and negatively. Activates the expression of E2FB. Involved in the control of cell-cycle progression from G1 to S phase. Stimulates cell proliferation and delays differentiation. The chain is Transcription factor E2FA (E2FA) from Arabidopsis thaliana (Mouse-ear cress).